The chain runs to 118 residues: Large ribosomal subunit protein bL20 (118 aa).

The protein belongs to the bacterial ribosomal protein bL20 family.

In terms of biological role, binds directly to 23S ribosomal RNA and is necessary for the in vitro assembly process of the 50S ribosomal subunit. It is not involved in the protein synthesizing functions of that subunit. The protein is Large ribosomal subunit protein bL20 of Acidiphilium cryptum (strain JF-5).